Reading from the N-terminus, the 135-residue chain is Large ribosomal subunit protein uL16c (135 aa).

This sequence belongs to the universal ribosomal protein uL16 family. In terms of assembly, part of the 50S ribosomal subunit.

It localises to the plastid. It is found in the chloroplast. The polypeptide is Large ribosomal subunit protein uL16c (Aethionema cordifolium (Lebanon stonecress)).